Here is a 98-residue protein sequence, read N- to C-terminus: Phosphoribosyl-ATP pyrophosphatase (98 aa).

This sequence belongs to the PRA-PH family.

The protein localises to the cytoplasm. The enzyme catalyses 1-(5-phospho-beta-D-ribosyl)-ATP + H2O = 1-(5-phospho-beta-D-ribosyl)-5'-AMP + diphosphate + H(+). The protein operates within amino-acid biosynthesis; L-histidine biosynthesis; L-histidine from 5-phospho-alpha-D-ribose 1-diphosphate: step 2/9. This is Phosphoribosyl-ATP pyrophosphatase from Haloarcula marismortui (strain ATCC 43049 / DSM 3752 / JCM 8966 / VKM B-1809) (Halobacterium marismortui).